The chain runs to 305 residues: UDP-3-O-acyl-N-acetylglucosamine deacetylase (305 aa).

Positions 79, 238, and 242 each coordinate Zn(2+). H265 (proton donor) is an active-site residue.

It belongs to the LpxC family. It depends on Zn(2+) as a cofactor.

It carries out the reaction a UDP-3-O-[(3R)-3-hydroxyacyl]-N-acetyl-alpha-D-glucosamine + H2O = a UDP-3-O-[(3R)-3-hydroxyacyl]-alpha-D-glucosamine + acetate. The protein operates within glycolipid biosynthesis; lipid IV(A) biosynthesis; lipid IV(A) from (3R)-3-hydroxytetradecanoyl-[acyl-carrier-protein] and UDP-N-acetyl-alpha-D-glucosamine: step 2/6. In terms of biological role, catalyzes the hydrolysis of UDP-3-O-myristoyl-N-acetylglucosamine to form UDP-3-O-myristoylglucosamine and acetate, the committed step in lipid A biosynthesis. This is UDP-3-O-acyl-N-acetylglucosamine deacetylase from Pasteurella multocida (strain Pm70).